Here is a 319-residue protein sequence, read N- to C-terminus: Ankyrin repeat domain-containing protein 1 (319 aa).

Residues 63 to 89 (EKQLEAELKKKKLEQRSKLENLEDLEI) adopt a coiled-coil conformation. 5 ANK repeats span residues 152-181 (YKRT…QIEF), 185-214 (LEST…KISA), 218-247 (LLST…DLNA), 251-280 (EGDT…DLTI), and 284-315 (AGKT…KTSR).

As to quaternary structure, interacts with TTN/titin and YBX1.

It localises to the nucleus. In terms of biological role, may play an important role in endothelial cell activation. May act as a nuclear transcription factor that negatively regulates the expression of cardiac genes. The chain is Ankyrin repeat domain-containing protein 1 (ANKRD1) from Oryctolagus cuniculus (Rabbit).